The chain runs to 265 residues: uncharacterized protein (265 aa).

An N-terminal signal peptide occupies residues 1-23; it reads MNYFRILYCSVLLFFSFFSCTSA. The 182-residue stretch at 67-248 folds into the NodB homology domain; sequence KEIYLTFDNG…TLKQQGYTFK (182 aa).

Belongs to the polysaccharide deacetylase family.

This is an uncharacterized protein from Geobacillus stearothermophilus (Bacillus stearothermophilus).